Here is a 690-residue protein sequence, read N- to C-terminus: CREB-H transcription factor homolog let-607 (690 aa).

3 disordered regions span residues asparagine 87–glycine 118, serine 166–leucine 192, and proline 205–proline 253. Composition is skewed to low complexity over residues serine 100–serine 116, glutamine 170–glutamine 181, and proline 213–threonine 236. The bZIP domain occupies aspartate 284–leucine 347. The basic motif stretch occupies residues lysine 286–lysine 321. The stretch at lysine 295–glutamine 350 forms a coiled coil. Residues leucine 326–leucine 333 are leucine-zipper. A compositionally biased stretch (polar residues) spans histidine 451–histidine 464. Disordered stretches follow at residues histidine 451 to arginine 495 and glycine 509 to proline 536. 2 stretches are compositionally biased toward low complexity: residues glutamine 480–serine 492 and serine 514–serine 535.

It belongs to the bZIP family.

Its subcellular location is the nucleus. Its function is as follows. Probable transcription factor, required during migration of the gonadal distal tip cells (DTC). Probably regulates cell adhesion of DTCs via modulation of expression of genes involved in integrin-mediated adhesion, including tln-1, src-1, and integrin pat-2. Modulates expression of genes involved in protein trafficking during embryogenesis, including emo-1, sec-61, calu-1, sec-24.1, enpl-1, sar-1 and tfg-1. This chain is CREB-H transcription factor homolog let-607, found in Caenorhabditis elegans.